A 308-amino-acid chain; its full sequence is Ribosomal protein uL3 glutamine methyltransferase (308 aa).

The protein belongs to the protein N5-glutamine methyltransferase family. PrmB subfamily.

It catalyses the reaction L-glutaminyl-[ribosomal protein uL3] + S-adenosyl-L-methionine = N(5)-methyl-L-glutaminyl-[ribosomal protein uL3] + S-adenosyl-L-homocysteine + H(+). Methylates large ribosomal subunit protein uL3 on a specific glutamine residue. This chain is Ribosomal protein uL3 glutamine methyltransferase, found in Xanthomonas campestris pv. campestris (strain ATCC 33913 / DSM 3586 / NCPPB 528 / LMG 568 / P 25).